A 233-amino-acid chain; its full sequence is Small ribosomal subunit protein uS3 (233 aa).

Residues 39–108 (IRTALFKLLK…KLIVNVRVIE (70 aa)) enclose the KH type-2 domain.

It belongs to the universal ribosomal protein uS3 family. As to quaternary structure, part of the 30S ribosomal subunit. Forms a tight complex with proteins S10 and S14.

In terms of biological role, binds the lower part of the 30S subunit head. Binds mRNA in the 70S ribosome, positioning it for translation. In Mycoplasma mycoides subsp. mycoides SC (strain CCUG 32753 / NCTC 10114 / PG1), this protein is Small ribosomal subunit protein uS3.